The primary structure comprises 229 residues: Secretory carrier-associated membrane protein 4 (229 aa).

At 1–39 (MSEKENNFPPLPKFIPVKPCFYQNFSDEIPVEHQVLVKR) the chain is on the cytoplasmic side. The next 4 membrane-spanning stretches (helical) occupy residues 40–60 (IYRL…ACLA), 61–81 (WWIG…LLLF), 105–125 (FMAF…QAIG), and 149–169 (VVML…AIAI). Over 170–229 (MKVHRIYRGAGGSFQKAQTEWNTGTWRNPPSREAQYNNFSGNSLPEYPTVPSYPGSGQWP) the chain is Cytoplasmic. Phosphothreonine is present on threonine 194. Residues 208-229 (FSGNSLPEYPTVPSYPGSGQWP) form a disordered region.

Belongs to the SCAMP family.

The protein localises to the membrane. Functionally, probably involved in membrane protein trafficking. This is Secretory carrier-associated membrane protein 4 (SCAMP4) from Pongo abelii (Sumatran orangutan).